The sequence spans 559 residues: MRSDTIKSGFEKAPHRSLLKATGAIRSSSDYRKPFIGICNSYNELIPGHTHLQELGRIAKEAVREAGGVPFEFNTIGVCDGIAMGHIGMRYSLASRELIADSVETVAEAHRLDGLVCIPNCDKITPGMMMAALRINIPVIFVSGGPMKAGHTPEGKTVDLISVFEAVGQCSNGSITEGELQNIEEHACPGCGSCSGMFTANSMNCLSEALGFALPGNGTIVAEDPRRLELVKAASRRIVDLVENNVRPRDILTRQALLNAFALDFAMGGSTNTILHTLAIANEAGLSFDFSELNALSAKTPYICQVSPATMAVHIEDVDRAGGISAILKELSSIDGLLDLSAITVTGKTLGENIANAEVLDRSVIRSISDPYSATGGLAVLYGNLAPQGAVVKTGAVSPQMMQHSGPAKVYNAQDDAIKGIMEGDVKAGDVVVIRYEGPKGGPGMPEMLSPTSAIMGRGLGDSVALITDGRFSGGSRGACIGHVSPEAAERGPIAALQNGDIITIDIPARTMSVALSESTIKERLAQLPPFEPKIKRGYLARYAQLVTSANTGAILGHL.

Position 80 (Asp-80) interacts with Mg(2+). Cys-121 provides a ligand contact to [2Fe-2S] cluster. Residues Asp-122 and Lys-123 each contribute to the Mg(2+) site. N6-carboxylysine is present on Lys-123. Residue Cys-194 participates in [2Fe-2S] cluster binding. Glu-447 provides a ligand contact to Mg(2+). Ser-473 functions as the Proton acceptor in the catalytic mechanism.

Belongs to the IlvD/Edd family. In terms of assembly, homodimer. It depends on [2Fe-2S] cluster as a cofactor. Mg(2+) is required as a cofactor.

It catalyses the reaction (2R)-2,3-dihydroxy-3-methylbutanoate = 3-methyl-2-oxobutanoate + H2O. It carries out the reaction (2R,3R)-2,3-dihydroxy-3-methylpentanoate = (S)-3-methyl-2-oxopentanoate + H2O. Its pathway is amino-acid biosynthesis; L-isoleucine biosynthesis; L-isoleucine from 2-oxobutanoate: step 3/4. It participates in amino-acid biosynthesis; L-valine biosynthesis; L-valine from pyruvate: step 3/4. In terms of biological role, functions in the biosynthesis of branched-chain amino acids. Catalyzes the dehydration of (2R,3R)-2,3-dihydroxy-3-methylpentanoate (2,3-dihydroxy-3-methylvalerate) into 2-oxo-3-methylpentanoate (2-oxo-3-methylvalerate) and of (2R)-2,3-dihydroxy-3-methylbutanoate (2,3-dihydroxyisovalerate) into 2-oxo-3-methylbutanoate (2-oxoisovalerate), the penultimate precursor to L-isoleucine and L-valine, respectively. The chain is Dihydroxy-acid dehydratase from Chlorobium chlorochromatii (strain CaD3).